Consider the following 585-residue polypeptide: Arginine--tRNA ligase (585 aa).

The 'HIGH' region motif lies at 127 to 137 (PNTNKPLHVGH).

It belongs to the class-I aminoacyl-tRNA synthetase family. Monomer.

It is found in the cytoplasm. It catalyses the reaction tRNA(Arg) + L-arginine + ATP = L-arginyl-tRNA(Arg) + AMP + diphosphate. The sequence is that of Arginine--tRNA ligase from Borrelia garinii subsp. bavariensis (strain ATCC BAA-2496 / DSM 23469 / PBi) (Borreliella bavariensis).